Here is a 100-residue protein sequence, read N- to C-terminus: Small ribosomal subunit protein uS14c (100 aa).

Belongs to the universal ribosomal protein uS14 family. Part of the 30S ribosomal subunit.

The protein resides in the plastid. It localises to the chloroplast. In terms of biological role, binds 16S rRNA, required for the assembly of 30S particles. This chain is Small ribosomal subunit protein uS14c, found in Oedogonium cardiacum (Filamentous green alga).